Consider the following 300-residue polypeptide: Zinc finger CCCH-type antiviral protein 1-like (300 aa).

A2 is modified (N-acetylalanine). Over residues N252–S263 the composition is skewed to polar residues. The tract at residues N252 to K300 is disordered. Positions V271–A283 are enriched in low complexity.

The sequence is that of Zinc finger CCCH-type antiviral protein 1-like (ZC3HAV1L) from Homo sapiens (Human).